The following is a 295-amino-acid chain: N-acetylmuramic acid 6-phosphate etherase (295 aa).

Residues Val-54–Lys-217 enclose the SIS domain. Catalysis depends on Glu-82, which acts as the Proton donor. Glu-113 is an active-site residue.

Belongs to the GCKR-like family. MurNAc-6-P etherase subfamily. Homodimer.

It carries out the reaction N-acetyl-D-muramate 6-phosphate + H2O = N-acetyl-D-glucosamine 6-phosphate + (R)-lactate. The protein operates within amino-sugar metabolism; N-acetylmuramate degradation. In terms of biological role, specifically catalyzes the cleavage of the D-lactyl ether substituent of MurNAc 6-phosphate, producing GlcNAc 6-phosphate and D-lactate. This Geobacillus sp. (strain WCH70) protein is N-acetylmuramic acid 6-phosphate etherase.